The primary structure comprises 300 residues: 7-methylguanosine phosphate-specific 5'-nucleotidase (300 aa).

The Nucleophile role is filled by Asp41. The Mg(2+) site is built by Asp41 and Asp43. Asp43 (proton donor) is an active-site residue. Position 88 (Glu88) interacts with CMP. Glu88 is a binding site for N(7)-methyl-GMP. Substrate is bound by residues Ser156–Ala157 and Lys205. Asp230 is a binding site for Mg(2+). Lys256 carries the N6-acetyllysine modification.

This sequence belongs to the pyrimidine 5'-nucleotidase family. In terms of assembly, monomer.

It localises to the cytoplasm. It carries out the reaction N(7)-methyl-GMP + H2O = N(7)-methylguanosine + phosphate. The catalysed reaction is CMP + H2O = cytidine + phosphate. It catalyses the reaction a ribonucleoside 5'-phosphate + H2O = a ribonucleoside + phosphate. Specifically hydrolyzes 7-methylguanosine monophosphate (m(7)GMP) to 7-methylguanosine and inorganic phosphate. The specific activity for m(7)GMP may protect cells against undesired salvage of m(7)GMP and its incorporation into nucleic acids. Also has weak activity for CMP. UMP and purine nucleotides are poor substrates. In Rattus norvegicus (Rat), this protein is 7-methylguanosine phosphate-specific 5'-nucleotidase (Nt5c3b).